The chain runs to 198 residues: Fucoxanthin-chlorophyll a-c binding protein B, chloroplastic (198 aa).

The transit peptide at 1-31 (MKFTVFASLFASAAAFAPAQQAARTSVATNM) directs the protein to the chloroplast. Transmembrane regions (helical) follow at residues 73–94 (ISMLAVAGYLAQEAGWRLGGDI), 114–134 (IPQAGLIQIIAFIGFLETSVM), and 174–196 (GRAAQMGILALMVHEQLGVNILP).

It belongs to the fucoxanthin chlorophyll protein family. The LHC complex of chromophytic algae is composed of fucoxanthin, chlorophyll A and C bound non-covalently by fucoxanthin chlorophyll proteins (FCPs). The ratio of the pigments in LHC; fucoxanthin: chlorophyll C: chlorophyll A; (0.6-1): (0.1-0.3): (1).

The protein resides in the plastid. The protein localises to the chloroplast thylakoid membrane. Its function is as follows. The light-harvesting complex (LHC) functions as a light receptor, it captures and delivers excitation energy to photosystems with which it is closely associated. Energy is transferred from the carotenoid and chlorophyll C (or B) to chlorophyll A and the photosynthetic reaction centers where it is used to synthesize ATP and reducing power. The polypeptide is Fucoxanthin-chlorophyll a-c binding protein B, chloroplastic (FCPB) (Phaeodactylum tricornutum (Diatom)).